The chain runs to 435 residues: Monodehydroascorbate reductase 3, cytosolic (435 aa).

Residues G14–A17, E41, R48, K53, I96, and R147–E148 contribute to the FAD site. NAD(+)-binding positions include G172–E178, E196, R202, and G261. Y174 to E178 contributes to the NADP(+) binding site. The NADP(+) site is built by R202 and G261. D298 provides a ligand contact to FAD. An NAD(+)-binding site is contributed by E314–H315. An NADP(+)-binding site is contributed by E314–H315. Position 316 (V316) interacts with FAD. An L-ascorbate-binding site is contributed by R320. Residue Y349 coordinates FAD. Residue Y349 coordinates NAD(+). Y349 provides a ligand contact to NADP(+). L-ascorbate is bound at residue R351.

The protein belongs to the FAD-dependent oxidoreductase family. Requires FAD as cofactor.

It is found in the cytoplasm. The enzyme catalyses 2 monodehydro-L-ascorbate radical + NADH + H(+) = 2 L-ascorbate + NAD(+). Catalyzes the conversion of monodehydroascorbate to ascorbate, oxidizing NADH in the process. Ascorbate is a major antioxidant against reactive oxygen species (ROS) and nitric oxide (NO). Can use NADPH as electron donor, but possesses lower activity compared to NADH as electron donor. The chain is Monodehydroascorbate reductase 3, cytosolic from Oryza sativa subsp. japonica (Rice).